A 181-amino-acid polypeptide reads, in one-letter code: Ribulose bisphosphate carboxylase small subunit 2B, chloroplastic (181 aa).

The transit peptide at 1 to 54 directs the protein to the chloroplast; sequence MASSMFSSTAVVTSPAQATMVAPFTGLKSSASFPVTRKANNDITSITSNGGRVS.

Belongs to the RuBisCO small chain family. Heterohexadecamer of 8 large and 8 small subunits.

Its subcellular location is the plastid. The protein resides in the chloroplast. Its function is as follows. RuBisCO catalyzes two reactions: the carboxylation of D-ribulose 1,5-bisphosphate, the primary event in carbon dioxide fixation, as well as the oxidative fragmentation of the pentose substrate. Both reactions occur simultaneously and in competition at the same active site. Although the small subunit is not catalytic it is essential for maximal activity. The sequence is that of Ribulose bisphosphate carboxylase small subunit 2B, chloroplastic (RBCS-2B) from Arabidopsis thaliana (Mouse-ear cress).